The sequence spans 91 residues: Large ribosomal subunit protein eL37 (91 aa).

C19, C22, C34, and C37 together coordinate Zn(2+). A C4-type zinc finger spans residues 19–37; sequence CKRCGKSSFHIQKKRCASC.

Belongs to the eukaryotic ribosomal protein eL37 family. The cofactor is Zn(2+).

Functionally, binds to the 23S rRNA. The polypeptide is Large ribosomal subunit protein eL37 (Caenorhabditis elegans).